Reading from the N-terminus, the 197-residue chain is MAILSDRDIKRYIEEGLITIDPLDDPERQIQPSSVDLRIGNEFKGFRVIRKPCIDPKDPSDIESYMETFHVEDGPFIIHPGEFALATTHEYIALPEDLVARVEGRSSIGRLGITMHVTAGYIDPGFHGRITLEISNIGKMPVALYPRQRVCQIVFETMTSPAERPYGHPSRDSKYIGQTRPQTSRIKDDYEIRNSRL.

DCTP contacts are provided by residues 105–110 (RSSIGR), aspartate 123, 131–133 (TLE), glutamine 152, tyrosine 166, lysine 174, and glutamine 178. The active-site Proton donor/acceptor is glutamate 133. The disordered stretch occupies residues 161–183 (PAERPYGHPSRDSKYIGQTRPQT). Positions 165 to 174 (PYGHPSRDSK) are enriched in basic and acidic residues.

It belongs to the dCTP deaminase family. As to quaternary structure, homotrimer.

The enzyme catalyses dCTP + 2 H2O = dUMP + NH4(+) + diphosphate. Its pathway is pyrimidine metabolism; dUMP biosynthesis; dUMP from dCTP: step 1/1. Bifunctional enzyme that catalyzes both the deamination of dCTP to dUTP and the hydrolysis of dUTP to dUMP without releasing the toxic dUTP intermediate. In Methanothermobacter thermautotrophicus (strain ATCC 29096 / DSM 1053 / JCM 10044 / NBRC 100330 / Delta H) (Methanobacterium thermoautotrophicum), this protein is dCTP deaminase, dUMP-forming.